Consider the following 428-residue polypeptide: Involucrin (428 aa).

Disordered regions lie at residues 1-128 (MSQQ…EEKK) and 140-398 (KRDD…GQAQ). Basic and acidic residues predominate over residues 56 to 76 (PSKHEEKHVTIVKGVPEHECE). Over residues 77 to 92 (QQQQAQGQERQQQHWG) the composition is skewed to low complexity. Basic and acidic residues-rich tracts occupy residues 107–117 (LKQEEAQREKQ), 162–174 (QLKHLEQQEKPLE), and 192–208 (QLKHLEEQKGQLKHLEQ). The segment covering 209–218 (QEGQLELPEQ) has biased composition (low complexity). Residues 220–297 (DQPKHLEQLE…CEGQLEHLEQ (78 aa)) are compositionally biased toward basic and acidic residues. Positions 298 to 311 (QEGQLELPEQQVGQ) are enriched in low complexity. 3 stretches are compositionally biased toward basic and acidic residues: residues 313-327 (KHLEQEEKQLEHPEQ), 352-366 (KHLEQQEKQLEHPEQ), and 374-385 (QLKDLEQQERQL).

The protein belongs to the involucrin family. In terms of assembly, directly or indirectly cross-linked to cornifelin (CNFN). Post-translationally, substrate of transglutaminase. Specific glutamines or lysines are cross-linked to keratins, desmoplakin and to inter involucrin molecules. In terms of tissue distribution, keratinocytes of epidermis and other stratified squamous epithelia.

It localises to the cytoplasm. Functionally, part of the insoluble cornified cell envelope (CE) of stratified squamous epithelia. The sequence is that of Involucrin (IVL) from Cebus albifrons (White-fronted capuchin).